Reading from the N-terminus, the 269-residue chain is Autophagy-related protein 5 (269 aa).

Lysine 102 participates in a covalent cross-link: Glycyl lysine isopeptide (Lys-Gly) (interchain with G-Cter in ATG12).

Belongs to the ATG5 family. In terms of assembly, conjugated with ATG12. The ATG5-ATG12 conjugate forms a complex with several units of ATG16. The ATG12-ATG5 conjugate also associates with ATG3. Post-translationally, conjugated to ATG12; which is essential for autophagy. Conjugation with ATG12 involves ATG7 as an E1-like activating enzyme and ATG10 as an E2-like conjugating enzyme.

The protein localises to the preautophagosomal structure membrane. Involved in cytoplasm to vacuole transport (Cvt) and autophagic vesicle formation. Autophagy is essential for maintenance of amino acid levels and protein synthesis under nitrogen starvation. Required for selective autophagic degradation of the nucleus (nucleophagy). Also required for mitophagy, which eliminates defective or superfluous mitochondria in order to fulfill cellular energy requirements and prevent excess ROS production. Conjugation with ATG12, through a ubiquitin-like conjugating system involving ATG7 as an E1-like activating enzyme and ATG10 as an E2-like conjugating enzyme, is essential for its function. The ATG12-ATG5 conjugate acts as an E3-like enzyme which is required for lipidation of ATG8 and ATG8 association to the vesicle membranes. ATG12-ATG5 rearranges the ATG3 catalytic center and enhances its E2 activity. Required for proper vegetative growth, asexual/sexual reproduction, but, unlike several plant and animal pathogenic fungi, where ATG5 is required for infection, in B.bassiana it is dispensable for pathogenesis. This chain is Autophagy-related protein 5, found in Beauveria bassiana (strain ARSEF 2860) (White muscardine disease fungus).